We begin with the raw amino-acid sequence, 128 residues long: Large ribosomal subunit protein bL12 (128 aa).

Belongs to the bacterial ribosomal protein bL12 family. As to quaternary structure, homodimer. Part of the ribosomal stalk of the 50S ribosomal subunit. Forms a multimeric L10(L12)X complex, where L10 forms an elongated spine to which 2 to 4 L12 dimers bind in a sequential fashion. Binds GTP-bound translation factors.

Forms part of the ribosomal stalk which helps the ribosome interact with GTP-bound translation factors. Is thus essential for accurate translation. This Corynebacterium jeikeium (strain K411) protein is Large ribosomal subunit protein bL12.